A 167-amino-acid chain; its full sequence is Aphrodisin (167 aa).

The N-terminal stretch at 1–16 (MVKILVLALVFSLAHA) is a signal peptide. Residue Q17 is modified to Pyrrolidone carboxylic acid. 2 disulfides stabilise this stretch: C54-C58 and C73-C165. N-linked (GlcNAc...) asparagine glycans are attached at residues N57 and N85.

It belongs to the calycin superfamily. Lipocalin family. In terms of tissue distribution, expressed in the vagina, uterus, and Bartholin's glands of female hamsters. Secreted in vaginal discharge.

The protein resides in the secreted. Acts as an aphrodisiac pheromone, reliably eliciting copulatory behavior from male hamster. The chain is Aphrodisin from Mesocricetus auratus (Golden hamster).